The sequence spans 71 residues: Small ribosomal subunit protein bS21 (71 aa).

This sequence belongs to the bacterial ribosomal protein bS21 family.

The sequence is that of Small ribosomal subunit protein bS21 from Alcanivorax borkumensis (strain ATCC 700651 / DSM 11573 / NCIMB 13689 / SK2).